Reading from the N-terminus, the 546-residue chain is Chaperonin GroEL (546 aa).

Residues 30–33, K51, 87–91, G415, and D496 contribute to the ATP site; these read TLGP and DGTTT. Positions 527-546 are disordered; that stretch reads EKKAPAGAPGGMGGMGDMDF. A compositionally biased stretch (gly residues) spans 534 to 546; the sequence is APGGMGGMGDMDF.

The protein belongs to the chaperonin (HSP60) family. Forms a cylinder of 14 subunits composed of two heptameric rings stacked back-to-back. Interacts with the co-chaperonin GroES.

The protein resides in the cytoplasm. The catalysed reaction is ATP + H2O + a folded polypeptide = ADP + phosphate + an unfolded polypeptide.. Its function is as follows. Together with its co-chaperonin GroES, plays an essential role in assisting protein folding. The GroEL-GroES system forms a nano-cage that allows encapsulation of the non-native substrate proteins and provides a physical environment optimized to promote and accelerate protein folding. In Rhodospirillum centenum (strain ATCC 51521 / SW), this protein is Chaperonin GroEL.